We begin with the raw amino-acid sequence, 249 residues long: tRNA (guanine-N(1)-)-methyltransferase (249 aa).

S-adenosyl-L-methionine contacts are provided by residues Gly113 and 133 to 138; that span reads IGDFVL.

This sequence belongs to the RNA methyltransferase TrmD family. Homodimer.

The protein resides in the cytoplasm. The enzyme catalyses guanosine(37) in tRNA + S-adenosyl-L-methionine = N(1)-methylguanosine(37) in tRNA + S-adenosyl-L-homocysteine + H(+). Functionally, specifically methylates guanosine-37 in various tRNAs. In Aliivibrio salmonicida (strain LFI1238) (Vibrio salmonicida (strain LFI1238)), this protein is tRNA (guanine-N(1)-)-methyltransferase.